Here is a 136-residue protein sequence, read N- to C-terminus: Psoriasis susceptibility 1 candidate gene 2 protein (136 aa).

A signal peptide spans methionine 1–glycine 22. The tract at residues isoleucine 20 to arginine 136 is disordered. 2 stretches are compositionally biased toward pro residues: residues proline 44–proline 69 and proline 84–proline 116. Positions valine 118–arginine 136 are enriched in basic and acidic residues.

Expressed in skin. Also expressed in heart and skeletal muscle.

It localises to the secreted. In Homo sapiens (Human), this protein is Psoriasis susceptibility 1 candidate gene 2 protein (PSORS1C2).